A 347-amino-acid chain; its full sequence is Pre-B-cell leukemia transcription factor 1 (347 aa).

The disordered stretch occupies residues 1 to 40; that stretch reads MDDQPRLMHSHPGVGMAGHPSLSQHMQDGTGANEGEGGRK. The 195-residue stretch at 38–232 folds into the PBC domain; it reads GRKQDIGDIL…VMILRSRFLD (195 aa). A PBC-A region spans residues 45–124; the sequence is DILQQIMTIT…EGVAGPEKGG (80 aa). Residues 127–232 form a PBC-B region; that stretch reads AAAAAAAAAS…VMILRSRFLD (106 aa). The segment at residues 233 to 295 is a DNA-binding region (homeobox; TALE-type); the sequence is ARRKRRNFNK…NKRIRYKKNI (63 aa). Residues 318–331 are compositionally biased toward polar residues; it reads VHGSQANSPSTPSS. Residues 318–347 form a disordered region; it reads VHGSQANSPSTPSSAGGYPSPCYQSDRRIQ.

Belongs to the TALE/PBX homeobox family. In terms of assembly, forms a heterodimer with meis1; the interaction is necessary for neural fate induction.

It is found in the nucleus. Acts as a transcriptional activator in complex with isoform 2 of meis1, to induce posterior neural and neural crest gene expression, and thereby specify hindbrain and neural crest cell fate. Binds to a highly conserved region in the promoter of the neural crest gene zic3. Required for the nuclear transport or retention of meis1. The polypeptide is Pre-B-cell leukemia transcription factor 1 (Xenopus tropicalis (Western clawed frog)).